We begin with the raw amino-acid sequence, 443 residues long: Exodeoxyribonuclease 7 large subunit (443 aa).

Belongs to the XseA family. As to quaternary structure, heterooligomer composed of large and small subunits.

It is found in the cytoplasm. It catalyses the reaction Exonucleolytic cleavage in either 5'- to 3'- or 3'- to 5'-direction to yield nucleoside 5'-phosphates.. Its function is as follows. Bidirectionally degrades single-stranded DNA into large acid-insoluble oligonucleotides, which are then degraded further into small acid-soluble oligonucleotides. This Stenotrophomonas maltophilia (strain R551-3) protein is Exodeoxyribonuclease 7 large subunit.